The sequence spans 1324 residues: DNA mismatch repair protein MSH6 (1324 aa).

Polar residues predominate over residues 1 to 25 (MAPSRRQISGRSPLVNQQRQITSFF). Disordered stretches follow at residues 1-114 (MAPS…SPPQ) and 197-294 (KVVT…SKTD). A compositionally biased stretch (low complexity) spans 27–55 (KSASSSSSPSPSPSPSLSNKKTPKSNNPN). Over residues 56–67 (PKSPSPSPSPPK) the composition is skewed to pro residues. Low complexity predominate over residues 71 to 83 (KLNPNPSSNLPAR). Acidic residues predominate over residues 201–224 (DSDDDVEMGNVEEDKSDGDDSSDE). Residues 225 to 235 (DWGKNVGKEVC) show a composition bias toward basic and acidic residues. A compositionally biased stretch (acidic residues) spans 236–261 (ESEEDDVELVDENEMDEEELVEEKDE). The span at 262–273 (ETSKVNRVSKTD) shows a compositional bias: basic and acidic residues. 1083–1090 (GPNMGGKS) lines the ATP pocket.

Belongs to the DNA mismatch repair MutS family. In terms of assembly, heterodimer consisting of MSH2-MSH6 (MutS alpha).

It is found in the nucleus. Its function is as follows. Component of the post-replicative DNA mismatch repair system (MMR). Forms the heterodimer MutS alpha (MSH2-MSH6 heterodimer) which binds to DNA mismatches thereby initiating DNA repair. MutS alpha recognizes single base mismatches and trinucleotide insertion-deletion loops (IDL) in the DNA. Is involved in a UV-B-induced DNA damage response pathway. This Arabidopsis thaliana (Mouse-ear cress) protein is DNA mismatch repair protein MSH6 (MSH6).